A 637-amino-acid chain; its full sequence is DNA mismatch repair protein MutL (637 aa).

Residues 353–371 (GQGQRPVSSASMPSASRQA) are compositionally biased toward polar residues. The interval 353-444 (GQGQRPVSSA…SEAASETPHD (92 aa)) is disordered. A compositionally biased stretch (basic and acidic residues) spans 378 to 389 (DWIKEGVQDWDW). A compositionally biased stretch (pro residues) spans 396 to 406 (PQNPPQNPPPG). Over residues 430-444 (SGKELSEAASETPHD) the composition is skewed to basic and acidic residues.

The protein belongs to the DNA mismatch repair MutL/HexB family.

This protein is involved in the repair of mismatches in DNA. It is required for dam-dependent methyl-directed DNA mismatch repair. May act as a 'molecular matchmaker', a protein that promotes the formation of a stable complex between two or more DNA-binding proteins in an ATP-dependent manner without itself being part of a final effector complex. This is DNA mismatch repair protein MutL from Beijerinckia indica subsp. indica (strain ATCC 9039 / DSM 1715 / NCIMB 8712).